We begin with the raw amino-acid sequence, 149 residues long: Transcriptional repressor NrdR (149 aa).

The segment at 3-34 (CPFCSEQETKVIDSRLVAEGQQVRRRRECMVC) is a zinc-finger region. The 91-residue stretch at 49–139 (PRVIKRDGSR…VYRSFEDIRE (91 aa)) folds into the ATP-cone domain.

This sequence belongs to the NrdR family. Zn(2+) is required as a cofactor.

Its function is as follows. Negatively regulates transcription of bacterial ribonucleotide reductase nrd genes and operons by binding to NrdR-boxes. The chain is Transcriptional repressor NrdR from Alteromonas mediterranea (strain DSM 17117 / CIP 110805 / LMG 28347 / Deep ecotype).